The following is a 283-amino-acid chain: Bifunctional protein FolD (283 aa).

NADP(+)-binding positions include 165–167 and Ser190; that span reads GAS.

Belongs to the tetrahydrofolate dehydrogenase/cyclohydrolase family. As to quaternary structure, homodimer.

The enzyme catalyses (6R)-5,10-methylene-5,6,7,8-tetrahydrofolate + NADP(+) = (6R)-5,10-methenyltetrahydrofolate + NADPH. The catalysed reaction is (6R)-5,10-methenyltetrahydrofolate + H2O = (6R)-10-formyltetrahydrofolate + H(+). It participates in one-carbon metabolism; tetrahydrofolate interconversion. In terms of biological role, catalyzes the oxidation of 5,10-methylenetetrahydrofolate to 5,10-methenyltetrahydrofolate and then the hydrolysis of 5,10-methenyltetrahydrofolate to 10-formyltetrahydrofolate. This chain is Bifunctional protein FolD, found in Cupriavidus pinatubonensis (strain JMP 134 / LMG 1197) (Cupriavidus necator (strain JMP 134)).